The sequence spans 327 residues: Small ribosomal subunit protein uS4m (327 aa).

Positions 96 to 154 constitute an S4 RNA-binding domain; the sequence is SRLDMSIHRALFASSALQARQLVLHGKVHVNGKPERRAYRQLLPGDLVTVDQKSVMNCV. The span at 156-173 shows a compositional bias: polar residues; it reads ASSNNTPSIQDGKQTEQV. Residues 156-199 are disordered; the sequence is ASSNNTPSIQDGKQTEQVSSKDGENEKKKDNDDDLFEQTSNGKL. Over residues 174 to 186 the composition is skewed to basic and acidic residues; it reads SSKDGENEKKKDN.

This sequence belongs to the universal ribosomal protein uS4 family. As to quaternary structure, component of the mitochondrial small ribosomal subunit (mt-SSU). Mature yeast 74S mitochondrial ribosomes consist of a small (37S) and a large (54S) subunit. The 37S small subunit contains a 15S ribosomal RNA (15S mt-rRNA) and at least 32 different proteins. The 54S large subunit contains a 21S rRNA (21S mt-rRNA) and at least 45 different proteins. uS3m, uS4m and uS5m form the narrow entry site of the mRNA channel.

Its subcellular location is the mitochondrion. In terms of biological role, component of the mitochondrial ribosome (mitoribosome), a dedicated translation machinery responsible for the synthesis of mitochondrial genome-encoded proteins, including at least some of the essential transmembrane subunits of the mitochondrial respiratory chain. The mitoribosomes are attached to the mitochondrial inner membrane and translation products are cotranslationally integrated into the membrane. The sequence is that of Small ribosomal subunit protein uS4m (nam9) from Schizosaccharomyces pombe (strain 972 / ATCC 24843) (Fission yeast).